Here is a 99-residue protein sequence, read N- to C-terminus: Putative pterin-4-alpha-carbinolamine dehydratase (99 aa).

It belongs to the pterin-4-alpha-carbinolamine dehydratase family.

It catalyses the reaction (4aS,6R)-4a-hydroxy-L-erythro-5,6,7,8-tetrahydrobiopterin = (6R)-L-erythro-6,7-dihydrobiopterin + H2O. This Synechococcus sp. (strain CC9311) protein is Putative pterin-4-alpha-carbinolamine dehydratase.